A 177-amino-acid polypeptide reads, in one-letter code: Interleukin-7 (177 aa).

Residues 1–25 (MFHVSFRYIFGLPPLILVLLPVASS) form the signal peptide. Intrachain disulfides connect Cys27–Cys166, Cys59–Cys154, and Cys72–Cys117. Residues Asn95, Asn116, and Asn141 are each glycosylated (N-linked (GlcNAc...) asparagine).

It belongs to the IL-7/IL-9 family. In terms of assembly, interacts with IL7R and CSF2RG.

The protein resides in the secreted. Functionally, hematopoietic cytokine that plays an essential role in the development, expansion, and survival of naive and memory T-cells and B-cells thereby regulating the number of mature lymphocytes and maintaining lymphoid homeostasis. Mechanistically, exerts its biological effects through a receptor composed of IL7RA subunit and the cytokine receptor common subunit gamma/CSF2RG. Binding to the receptor leads to activation of various kinases including JAK1 or JAK3 depending on the cell type and subsequently propagation of signals through activation of several downstream signaling pathways including the PI3K/Akt/mTOR or the JAK-STAT5. This chain is Interleukin-7 (IL7), found in Homo sapiens (Human).